Reading from the N-terminus, the 465-residue chain is Lactaldehyde dehydrogenase (465 aa).

220–225 (GSVEVG) lines the NAD(+) pocket. Active-site residues include Glu-240 and Cys-274.

This sequence belongs to the aldehyde dehydrogenase family. In terms of assembly, homotetramer.

It carries out the reaction (S)-lactaldehyde + NAD(+) + H2O = (S)-lactate + NADH + 2 H(+). It functions in the pathway cofactor biosynthesis; coenzyme F420 biosynthesis. Its function is as follows. Involved in F420 biosynthesis through the oxidation of lactaldehyde to lactate. This chain is Lactaldehyde dehydrogenase, found in Methanococcus aeolicus (strain ATCC BAA-1280 / DSM 17508 / OCM 812 / Nankai-3).